A 436-amino-acid chain; its full sequence is Arginine biosynthesis bifunctional protein ArgJ, mitochondrial (436 aa).

6 residues coordinate substrate: T172, K198, T209, E298, N431, and S436. T209 serves as the catalytic Nucleophile.

Belongs to the ArgJ family. In terms of assembly, heterodimer of an alpha and a beta chain. Post-translationally, the alpha and beta chains are autoproteolytically processed from a single precursor protein within the mitochondrion.

It localises to the mitochondrion matrix. The catalysed reaction is N(2)-acetyl-L-ornithine + L-glutamate = N-acetyl-L-glutamate + L-ornithine. It carries out the reaction L-glutamate + acetyl-CoA = N-acetyl-L-glutamate + CoA + H(+). It functions in the pathway amino-acid biosynthesis; L-arginine biosynthesis; L-ornithine and N-acetyl-L-glutamate from L-glutamate and N(2)-acetyl-L-ornithine (cyclic): step 1/1. The protein operates within amino-acid biosynthesis; L-arginine biosynthesis; N(2)-acetyl-L-ornithine from L-glutamate: step 1/4. In terms of biological role, catalyzes two activities which are involved in the cyclic version of arginine biosynthesis: the synthesis of acetylglutamate from glutamate and acetyl-CoA, and of ornithine by transacetylation between acetylornithine and glutamate. In Meyerozyma guilliermondii (strain ATCC 6260 / CBS 566 / DSM 6381 / JCM 1539 / NBRC 10279 / NRRL Y-324) (Yeast), this protein is Arginine biosynthesis bifunctional protein ArgJ, mitochondrial.